Here is a 204-residue protein sequence, read N- to C-terminus: LexA repressor (204 aa).

Positions 28 to 48 form a DNA-binding region, H-T-H motif; the sequence is VREIGEAVGLASSSTVHGHLD. Residues Ser-126 and Lys-164 each act as for autocatalytic cleavage activity in the active site.

Belongs to the peptidase S24 family. In terms of assembly, homodimer.

The enzyme catalyses Hydrolysis of Ala-|-Gly bond in repressor LexA.. In terms of biological role, represses a number of genes involved in the response to DNA damage (SOS response), including recA and lexA. In the presence of single-stranded DNA, RecA interacts with LexA causing an autocatalytic cleavage which disrupts the DNA-binding part of LexA, leading to derepression of the SOS regulon and eventually DNA repair. This Exiguobacterium sibiricum (strain DSM 17290 / CCUG 55495 / CIP 109462 / JCM 13490 / 255-15) protein is LexA repressor.